Consider the following 210-residue polypeptide: Ras-related protein RABC2a (210 aa).

A GTP-binding site is contributed by 20-27 (GDSGVGKS). Positions 41 to 49 (LAPTIGVDF) match the Effector region motif. Residues 67 to 71 (DTAGQ), 127 to 130 (NKVD), and 157 to 158 (SA) contribute to the GTP site. 2 S-geranylgeranyl cysteine lipidation sites follow: C208 and C209.

Belongs to the small GTPase superfamily. Rab family. In terms of assembly, interacts with XI-2/MYA2.

It localises to the cell membrane. It is found in the cytoplasm. In terms of biological role, intracellular vesicle trafficking and protein transport. The protein is Ras-related protein RABC2a (RABC2A) of Arabidopsis thaliana (Mouse-ear cress).